The sequence spans 268 residues: Dioscorin DB3S (268 aa).

An Alpha-carbonic anhydrase domain is found at Asp25–Glu259. Cys50 and Cys209 are disulfide-bonded. His91 serves as the catalytic Proton acceptor. Residues Asp92, His117–His119, Gln136, and Thr205–Ala206 each bind L-ascorbate.

Belongs to the alpha-class carbonic anhydrase family. Monomer. Homodimer. In terms of processing, not glycosylated. Expressed in tuber (at protein level).

The catalysed reaction is hydrogencarbonate + H(+) = CO2 + H2O. It catalyses the reaction 2 monodehydro-L-ascorbate radical + NADH + H(+) = 2 L-ascorbate + NAD(+). Its function is as follows. Storage protein of tuber. Involved in protection against oxidative stress. Has carbonate dehydratase and weak trypsin inhibitor activity detected by measuring the dehydration of sodium bicarbonate and the inhibition of trypsin-catalyzed hydrolysis of N-benzoyl-L-arginine-4-nitro anilide, respectively. Contrarily, no carbonate dehydratase or trypsin inhibitor activity detected by measuring the hydrolysis of 4-nitrophenyl acetate or the inhibition of bovine trypsin-catalyzed hydrolysis of N-benzoyl-L-arginine ethyl ester, respectively. Has dehydroascorbate (DHA) reductase and monodehydroascorbate (MDA) reductase activities. Catalyzes the reactions of carbonate dehydratase and DHA reductase independently of zinc and glutathione (GSH). The coupled reaction is capable of recycling a plant antioxidant ascorbate using ubiquitous compounds H(2)O and CO(2). Exhibits antioxidant activity. Able to scavenge 1,1-diphenyl-2-picrylhydrazyl (DPPH) radical and hydroxyl radicals. Exhibits immunomodulatory activity. Activates Toll-like receptor 4 signaling pathways by up-regulating the gene expression of pro-inflammatory cytokines, such as tumor necrosis factor alpha, interleukin-1 beta and interleukin-6, and chemokines RANTES and MCP-1, in mouse RAW 264.7 macrophages. Stimulates the phagocytosis of E.coli by the LPS-treated mouse macrophages. This is Dioscorin DB3S from Dioscorea polystachya (Chinese yam).